The primary structure comprises 923 residues: Lysosomal acid alpha-glucosidase (923 aa).

The signal sequence occupies residues 1–17 (MKHQVLLPLLVTTAIIA). Positions 18-36 (GSVGVYTHSKPLLGQSQDQ) are excised as a propeptide. Residues N65, N405, and N440 are each glycosylated (N-linked (GlcNAc...) asparagine). Catalysis depends on D455, which acts as the Nucleophile. E458 is an active-site residue. The active-site Proton donor is D585. N-linked (GlcNAc...) asparagine glycans are attached at residues N586, N621, N646, N848, N908, and N912.

The protein belongs to the glycosyl hydrolase 31 family.

It is found in the lysosome. Its subcellular location is the secreted. The enzyme catalyses Hydrolysis of terminal, non-reducing (1-&gt;4)-linked alpha-D-glucose residues with release of alpha-D-glucose.. In terms of biological role, essential for the degradation of glycogen to glucose in lysosomes. Has both alpha-1,4 and alpha-1,6-glucosidase activity. In Tetrahymena pyriformis, this protein is Lysosomal acid alpha-glucosidase.